Reading from the N-terminus, the 311-residue chain is Putative methylthioribose-1-phosphate isomerase (311 aa).

Substrate is bound by residues 46–48 (RGA), arginine 80, and glutamine 174. Aspartate 215 functions as the Proton donor in the catalytic mechanism. Substrate is bound at residue 224 to 225 (NK).

Belongs to the eIF-2B alpha/beta/delta subunits family. MtnA subfamily.

The enzyme catalyses 5-(methylsulfanyl)-alpha-D-ribose 1-phosphate = 5-(methylsulfanyl)-D-ribulose 1-phosphate. Catalyzes the interconversion of methylthioribose-1-phosphate (MTR-1-P) into methylthioribulose-1-phosphate (MTRu-1-P). This Methanothermobacter thermautotrophicus (strain ATCC 29096 / DSM 1053 / JCM 10044 / NBRC 100330 / Delta H) (Methanobacterium thermoautotrophicum) protein is Putative methylthioribose-1-phosphate isomerase.